Reading from the N-terminus, the 554-residue chain is Phosphomethylpyrimidine synthase (554 aa).

Residues Asn-191, Met-220, Tyr-249, His-285, 305-307 (SRG), 346-349 (DGLR), and Glu-385 contribute to the substrate site. His-389 contacts Zn(2+). Residue Tyr-412 coordinates substrate. Residue His-453 coordinates Zn(2+). The [4Fe-4S] cluster site is built by Cys-533, Cys-536, and Cys-541.

This sequence belongs to the ThiC family. As to quaternary structure, homodimer. [4Fe-4S] cluster is required as a cofactor.

It carries out the reaction 5-amino-1-(5-phospho-beta-D-ribosyl)imidazole + S-adenosyl-L-methionine = 4-amino-2-methyl-5-(phosphooxymethyl)pyrimidine + CO + 5'-deoxyadenosine + formate + L-methionine + 3 H(+). The protein operates within cofactor biosynthesis; thiamine diphosphate biosynthesis. Its function is as follows. Catalyzes the synthesis of the hydroxymethylpyrimidine phosphate (HMP-P) moiety of thiamine from aminoimidazole ribotide (AIR) in a radical S-adenosyl-L-methionine (SAM)-dependent reaction. The sequence is that of Phosphomethylpyrimidine synthase from Ehrlichia chaffeensis (strain ATCC CRL-10679 / Arkansas).